The sequence spans 486 residues: GDP-Man:Man(3)GlcNAc(2)-PP-Dol alpha-1,2-mannosyltransferase (486 aa).

The Lumenal segment spans residues 1 to 16 (MAGPMCLCGMMRLLTA). A helical transmembrane segment spans residues 17 to 37 (LFIPVLITSVGLCLIFVLLFI). Residues 38-229 (CTRLWVQRKK…SNNPVLSRLK (192 aa)) are Cytoplasmic-facing. Residues 230 to 250 (LIYYYLFALFYGWVGSCSDVI) constitute an intramembrane region (helical). Residues 251 to 393 (MVNSTWTFSH…IGLHTMWNEH (143 aa)) lie on the Cytoplasmic side of the membrane. Residues 394 to 414 (FGIGIVECMAAGTIILAHNSG) constitute an intramembrane region (helical). Residues 415–486 (GPKLDIVVPH…FLASSEPLFK (72 aa)) lie on the Cytoplasmic side of the membrane.

The protein belongs to the glycosyltransferase group 1 family. Glycosyltransferase 4 subfamily.

The protein localises to the endoplasmic reticulum membrane. The catalysed reaction is an alpha-D-Man-(1-&gt;3)-[alpha-D-Man-(1-&gt;6)]-beta-D-Man-(1-&gt;4)-beta-D-GlcNAc-(1-&gt;4)-alpha-D-GlcNAc-diphospho-di-trans,poly-cis-dolichol + 2 GDP-alpha-D-mannose = an alpha-D-Man-(1-&gt;2)-alpha-D-Man-(1-&gt;2)-alpha-D-Man-(1-&gt;3)-[alpha-D-Man-(1-&gt;6)]-beta-D-Man-(1-&gt;4)-beta-D-GlcNAc-(1-&gt;4)-alpha-D-GlcNAc-diphospho-di-trans,poly-cis-dolichol + 2 GDP + 2 H(+). Its pathway is protein modification; protein glycosylation. Its function is as follows. GDP-Man:Man(3)GlcNAc(2)-PP-Dol alpha-1,2-mannosyltransferase that operates in the biosynthetic pathway of dolichol-linked oligosaccharides, the glycan precursors employed in protein asparagine (N)-glycosylation. The assembly of dolichol-linked oligosaccharides begins on the cytosolic side of the endoplasmic reticulum membrane and finishes in its lumen. The sequential addition of sugars to dolichol pyrophosphate produces dolichol-linked oligosaccharides containing fourteen sugars, including two GlcNAcs, nine mannoses and three glucoses. Once assembled, the oligosaccharide is transferred from the lipid to nascent proteins by oligosaccharyltransferases. Catalyzes, on the cytoplasmic face of the endoplasmic reticulum, the addition of the fourth and fifth mannose residues to the dolichol-linked oligosaccharide chain, to produce Man(5)GlcNAc(2)-PP-dolichol core oligosaccharide. Man(5)GlcNAc(2)-PP-dolichol is a substrate for ALG3, the following enzyme in the biosynthetic pathway. In Xenopus laevis (African clawed frog), this protein is GDP-Man:Man(3)GlcNAc(2)-PP-Dol alpha-1,2-mannosyltransferase (alg11).